We begin with the raw amino-acid sequence, 377 residues long: Peroxisomal membrane protein PEX14 (377 aa).

The span at 1-15 shows a compositional bias: low complexity; the sequence is MASSEQAEQPSQPSS. Residues 1 to 24 are disordered; the sequence is MASSEQAEQPSQPSSTPGSENVLP. A2 is modified (N-acetylalanine). At 2–108 the chain is on the peroxisomal matrix side; that stretch reads ASSEQAEQPS…YSPAGSRWRD (107 aa). K34 carries the post-translational modification N6-acetyllysine. A helical transmembrane segment spans residues 109–126; it reads YGALAIIMAGIAFGFHQL. At 127 to 377 the chain is on the cytoplasmic side; it reads YKKYLLPLIL…EGASNESERD (251 aa). Residues 230–377 are disordered; the sequence is PPSPSAPKIP…EGASNESERD (148 aa). Position 232 is a phosphoserine (S232). Composition is skewed to low complexity over residues 244–259 and 265–275; these read PVKS…VNHH and SPVSNESTSSS. Phosphoserine is present on residues S282 and S335. The span at 323-342 shows a compositional bias: acidic residues; sequence KEDEEDEEDDDVSHVDEEDC. The segment covering 360-377 has biased composition (basic and acidic residues); that stretch reads QVEKLRRPEGASNESERD.

It belongs to the peroxin-14 family. As to quaternary structure, interacts with PEX13; forming the PEX13-PEX14 docking complex. Interacts with PEX5 (via WxxxF/Y motifs). Interacts with PEX19. Interacts with tubulin.

It is found in the peroxisome membrane. In terms of biological role, component of the PEX13-PEX14 docking complex, a translocon channel that specifically mediates the import of peroxisomal cargo proteins bound to PEX5 receptor. The PEX13-PEX14 docking complex forms a large import pore which can be opened to a diameter of about 9 nm. Mechanistically, PEX5 receptor along with cargo proteins associates with the PEX14 subunit of the PEX13-PEX14 docking complex in the cytosol, leading to the insertion of the receptor into the organelle membrane with the concomitant translocation of the cargo into the peroxisome matrix. Plays a key role for peroxisome movement through a direct interaction with tubulin. The polypeptide is Peroxisomal membrane protein PEX14 (Homo sapiens (Human)).